We begin with the raw amino-acid sequence, 197 residues long: Imidazoleglycerol-phosphate dehydratase (197 aa).

It belongs to the imidazoleglycerol-phosphate dehydratase family.

The protein resides in the cytoplasm. The enzyme catalyses D-erythro-1-(imidazol-4-yl)glycerol 3-phosphate = 3-(imidazol-4-yl)-2-oxopropyl phosphate + H2O. It participates in amino-acid biosynthesis; L-histidine biosynthesis; L-histidine from 5-phospho-alpha-D-ribose 1-diphosphate: step 6/9. In Pseudomonas aeruginosa (strain LESB58), this protein is Imidazoleglycerol-phosphate dehydratase.